A 519-amino-acid polypeptide reads, in one-letter code: Membrane-bound transcription factor site-2 protease (519 aa).

The Cytoplasmic segment spans residues 1–3; that stretch reads MIP. The helical transmembrane segment at 4-24 threads the bilayer; that stretch reads VSLVVVVVGGWTVVYLTDLVL. The Lumenal segment spans residues 25-74; sequence KSSVYFKHSYEDWLENNGLSISPFHIRWQTAVFNRAFYSWGRRKARMLYQ. 2 consecutive transmembrane segments (helical) span residues 75-95 and 96-107; these read WFNF…FLLG and KTLMQTLAQMMA. At 108-144 the chain is on the lumenal side; that stretch reads DSPSSYSSSSSSSSSSSSSSSSSSSSSSSLHNEQVLQ. Positions 115–135 are disordered; sequence SSSSSSSSSSSSSSSSSSSSS. A helical membrane pass occupies residues 145–169; that stretch reads VVVPGINLPVNQLTYFFTAVLISGV. His171 contributes to the Zn(2+) binding site. Residue Glu172 is part of the active site. 3 helical membrane-spanning segments follow: residues 174–186, 187–209, and 229–251; these read GHGI…QVRF, NGFG…TTHL, and FVLA…PFYY. His175 provides a ligand contact to Zn(2+). At 252-446 the chain is on the lumenal side; it reads TGVGVLITEV…LPVVVETFVK (195 aa). Asn337 carries N-linked (GlcNAc...) asparagine glycosylation. Helical transmembrane passes span 447–464 and 465–476; these read YLIS…VPCF and ALDGQWILNSFL. Over 477-492 the chain is Lumenal; it reads DATLTSVIGDNDVKDL. The helical transmembrane segment at 493–513 threads the bilayer; that stretch reads IGFFILLGGSVLLAANVTLGL. Over 514 to 519 the chain is Cytoplasmic; that stretch reads WMVTAR.

The protein belongs to the peptidase M50A family. It depends on Zn(2+) as a cofactor. As to expression, expressed in heart, brain, placenta, lung, liver, muscle, kidney and pancreas.

It localises to the membrane. The protein resides in the cytoplasm. The protein localises to the golgi apparatus membrane. The enzyme catalyses Cleaves several transcription factors that are type-2 transmembrane proteins within membrane-spanning domains. Known substrates include sterol regulatory element-binding protein (SREBP) -1, SREBP-2 and forms of the transcriptional activator ATF6. SREBP-2 is cleaved at the site 477-DRSRILL-|-CVLTFLCLSFNPLTSLLQWGGA-505. The residues Asn-Pro, 11 residues distal to the site of cleavage in the membrane-spanning domain, are important for cleavage by S2P endopeptidase. Replacement of either of these residues does not prevent cleavage, but there is no cleavage if both of these residues are replaced.. Zinc metalloprotease that mediates intramembrane proteolysis of proteins such as ATF6, ATF6B, SREBF1/SREBP1 and SREBF2/SREBP2. Catalyzes the second step in the proteolytic activation of the sterol regulatory element-binding proteins (SREBPs) SREBF1/SREBP1 and SREBF2/SREBP2: cleaves SREBPs within the first transmembrane segment, thereby releasing the N-terminal segment with a portion of the transmembrane segment attached. Mature N-terminal SREBP fragments shuttle to the nucleus and activate gene transcription. Also mediates the second step in the proteolytic activation of the cyclic AMP-dependent transcription factor ATF-6 (ATF6 and ATF6B). Involved in intramembrane proteolysis during bone formation. In astrocytes and osteoblasts, upon DNA damage and ER stress, mediates the second step of the regulated intramembrane proteolytic activation of the transcription factor CREB3L1, leading to the inhibition of cell-cycle progression. This is Membrane-bound transcription factor site-2 protease from Homo sapiens (Human).